Reading from the N-terminus, the 401-residue chain is Tyrosine--tRNA ligase (401 aa).

Positions 45-54 match the 'HIGH' region motif; it reads PTAPDLHLGH. The short motif at 230-234 is the 'KMSKS' region element; sequence KMSKS. K233 serves as a coordination point for ATP. In terms of domain architecture, S4 RNA-binding spans 339–399; the sequence is IWLAKALVEC…GKRKFAKLKV (61 aa).

The protein belongs to the class-I aminoacyl-tRNA synthetase family. TyrS type 2 subfamily. Homodimer.

The protein localises to the cytoplasm. It carries out the reaction tRNA(Tyr) + L-tyrosine + ATP = L-tyrosyl-tRNA(Tyr) + AMP + diphosphate + H(+). Its function is as follows. Catalyzes the attachment of tyrosine to tRNA(Tyr) in a two-step reaction: tyrosine is first activated by ATP to form Tyr-AMP and then transferred to the acceptor end of tRNA(Tyr). This is Tyrosine--tRNA ligase from Campylobacter jejuni subsp. jejuni serotype O:2 (strain ATCC 700819 / NCTC 11168).